A 334-amino-acid chain; its full sequence is Protein-methionine-sulfoxide reductase catalytic subunit MsrP (334 aa).

A signal peptide (tat-type signal) is located at residues 1-44; the sequence is MKKNQFLKESDVTAESVFFMKRRQVLKALGISAAALSLPHAAHA. Residues asparagine 88, 91–92, cysteine 146, threonine 181, asparagine 233, arginine 238, and 249–251 each bind Mo-molybdopterin; these read YE and GIK.

It belongs to the MsrP family. As to quaternary structure, heterodimer of a catalytic subunit (MsrP) and a heme-binding subunit (MsrQ). Mo-molybdopterin is required as a cofactor. Predicted to be exported by the Tat system. The position of the signal peptide cleavage has not been experimentally proven.

Its subcellular location is the periplasm. It catalyses the reaction L-methionyl-[protein] + a quinone + H2O = L-methionyl-(S)-S-oxide-[protein] + a quinol. It carries out the reaction L-methionyl-[protein] + a quinone + H2O = L-methionyl-(R)-S-oxide-[protein] + a quinol. In terms of biological role, part of the MsrPQ system that repairs oxidized periplasmic proteins containing methionine sulfoxide residues (Met-O), using respiratory chain electrons. Thus protects these proteins from oxidative-stress damage caused by reactive species of oxygen and chlorine generated by the host defense mechanisms. MsrPQ is essential for the maintenance of envelope integrity under bleach stress, rescuing a wide series of structurally unrelated periplasmic proteins from methionine oxidation, including the primary periplasmic chaperone SurA and the lipoprotein Pal. The catalytic subunit MsrP is non-stereospecific, being able to reduce both (R-) and (S-) diastereoisomers of methionine sulfoxide. This is Protein-methionine-sulfoxide reductase catalytic subunit MsrP from Escherichia coli (strain UTI89 / UPEC).